A 483-amino-acid polypeptide reads, in one-letter code: Replication factor C large subunit (483 aa).

43–50 contacts ATP; sequence GKPGIGKT. Basic and acidic residues predominate over residues 417–442; it reads ELKKKKKEEDAKGKKARGSKKEKEPI. The tract at residues 417–483 is disordered; sequence ELKKKKKEED…KSSQSTLFSF (67 aa). Polar residues predominate over residues 448–457; the sequence is SIDSFSSQEP.

This sequence belongs to the activator 1 small subunits family. RfcL subfamily. In terms of assembly, heteromultimer composed of small subunits (RfcS) and large subunits (RfcL).

In terms of biological role, part of the RFC clamp loader complex which loads the PCNA sliding clamp onto DNA. This is Replication factor C large subunit from Methanospirillum hungatei JF-1 (strain ATCC 27890 / DSM 864 / NBRC 100397 / JF-1).